Consider the following 257-residue polypeptide: NAD-capped RNA hydrolase NudC (257 aa).

K25 and R69 together coordinate substrate. Residues C98 and C101 each contribute to the Zn(2+) site. E111 lines the substrate pocket. Residues C116 and C119 each coordinate Zn(2+). Substrate is bound at residue Y124. The Nudix hydrolase domain maps to 125-248 (PQIAPCIIVA…TVARRLIEDT (124 aa)). A158, E174, and E178 together coordinate a divalent metal cation. A Nudix box motif is present at residues 159–180 (GFVEVGETLEQAVAREVMEESG). Position 192–199 (192–199 (QPWPFPQS)) interacts with substrate. Position 219 (E219) interacts with a divalent metal cation. A241 is a substrate binding site.

Belongs to the Nudix hydrolase family. NudC subfamily. As to quaternary structure, homodimer. Requires Mg(2+) as cofactor. Mn(2+) serves as cofactor. It depends on Zn(2+) as a cofactor.

It carries out the reaction a 5'-end NAD(+)-phospho-ribonucleoside in mRNA + H2O = a 5'-end phospho-adenosine-phospho-ribonucleoside in mRNA + beta-nicotinamide D-ribonucleotide + 2 H(+). The catalysed reaction is NAD(+) + H2O = beta-nicotinamide D-ribonucleotide + AMP + 2 H(+). The enzyme catalyses NADH + H2O = reduced beta-nicotinamide D-ribonucleotide + AMP + 2 H(+). Its function is as follows. mRNA decapping enzyme that specifically removes the nicotinamide adenine dinucleotide (NAD) cap from a subset of mRNAs by hydrolyzing the diphosphate linkage to produce nicotinamide mononucleotide (NMN) and 5' monophosphate mRNA. The NAD-cap is present at the 5'-end of some mRNAs and stabilizes RNA against 5'-processing. Has preference for mRNAs with a 5'-end purine. Catalyzes the hydrolysis of a broad range of dinucleotide pyrophosphates. The chain is NAD-capped RNA hydrolase NudC from Shigella flexneri.